Here is a 504-residue protein sequence, read N- to C-terminus: Signal transduction histidine-protein kinase/phosphatase MprB (504 aa).

Residues 1 to 26 lie on the Cytoplasmic side of the membrane; it reads MWWFRRRDRAPLRATSSLSLRWRVML. Residues 27-47 form a helical membrane-spanning segment; the sequence is LAMSMVAMVVVLMSFAVYAVI. At 48–163 the chain is on the extracellular side; the sequence is SAALYSDIDN…PTEAVMNKLR (116 aa). A helical membrane pass occupies residues 164 to 184; that stretch reads WVLLIVGGIGVAVAAVAGGMV. Topologically, residues 185 to 504 are cytoplasmic; the sequence is TRAGLRPVGR…SVESQSTRAT (320 aa). Residues 186–238 form the HAMP domain; sequence RAGLRPVGRLTEAAERVARTDDLRPIPVFGSDELARLTEAFNLMLRALAESRE. A Histidine kinase domain is found at 246-466; that stretch reads DAGHELRTPL…SIYVLLPGRR (221 aa). Histidine 249 is modified (phosphohistidine; by autocatalysis). A disordered region spans residues 471–504; the sequence is QLPGATAGARSTDIENSRGSANVISVESQSTRAT. Polar residues predominate over residues 487–504; it reads SRGSANVISVESQSTRAT.

Mg(2+) is required as a cofactor. The cofactor is Mn(2+). Autophosphorylated.

It localises to the cell membrane. The catalysed reaction is ATP + protein L-histidine = ADP + protein N-phospho-L-histidine.. Its function is as follows. Member of the two-component regulatory system MprB/MprA which contributes to maintaining a balance among several systems involved in stress resistance and is required for establishment and maintenance of persistent infection in the host. In response to environmental signals MprB acts both as a membrane-associated protein kinase that undergoes autophosphorylation and subsequently transfers the phosphate to MprA, and a protein phosphatase that dephosphorylates phospho-MprA. The sequence is that of Signal transduction histidine-protein kinase/phosphatase MprB (mprB) from Mycobacterium tuberculosis (strain ATCC 25177 / H37Ra).